Reading from the N-terminus, the 159-residue chain is Eukaryotic translation initiation factor 5A-2 (159 aa).

The segment covering 1–12 has biased composition (basic and acidic residues); the sequence is MSDEEHQFESKA. A disordered region spans residues 1–23; it reads MSDEEHQFESKADAGASKTYPQQ. Lysine 52 bears the Hypusine mark.

The protein belongs to the eIF-5A family. Lys-52 undergoes hypusination, a unique post-translational modification that consists in the addition of a butylamino group from spermidine to lysine side chain, leading to the formation of the unusual amino acid hypusine. eIF-5As are the only known proteins to undergo this modification, which is essential for their function.

In terms of biological role, translation factor that promotes translation elongation and termination, particularly upon ribosome stalling at specific amino acid sequence contexts. Binds between the exit (E) and peptidyl (P) site of the ribosome and promotes rescue of stalled ribosome: specifically required for efficient translation of polyproline-containing peptides as well as other motifs that stall the ribosome. Acts as a ribosome quality control (RQC) cofactor by joining the RQC complex to facilitate peptidyl transfer during CAT tailing step. In Nicotiana plumbaginifolia (Leadwort-leaved tobacco), this protein is Eukaryotic translation initiation factor 5A-2 (EIF-5A2).